Reading from the N-terminus, the 123-residue chain is Large ribosomal subunit protein uL14 (123 aa).

It belongs to the universal ribosomal protein uL14 family. In terms of assembly, part of the 50S ribosomal subunit. Forms a cluster with proteins L3 and L19. In the 70S ribosome, L14 and L19 interact and together make contacts with the 16S rRNA in bridges B5 and B8.

Functionally, binds to 23S rRNA. Forms part of two intersubunit bridges in the 70S ribosome. This chain is Large ribosomal subunit protein uL14, found in Koribacter versatilis (strain Ellin345).